The primary structure comprises 49 residues: Soritesidine (49 aa).

The protein localises to the secreted. Very potent toxin that exhibits a wide range of toxicities over various organisms and cells including brine shrimp larvae (Artemia salina), sea hare eggs (Aplysia kurodai), mice, and cultured mammalian cells. An SOR-containing fraction cleaves plasmid DNA in a bivalent metal ion dependent manner suggesting genotoxicity of SOR. In Spongosorites sp. (strain QM G324170) (Okinawan marine Sponge), this protein is Soritesidine.